The primary structure comprises 215 residues: Pyrophosphatase PpaX (215 aa).

Catalysis depends on Asp9, which acts as the Nucleophile.

This sequence belongs to the HAD-like hydrolase superfamily. PpaX family. The cofactor is Mg(2+).

It carries out the reaction diphosphate + H2O = 2 phosphate + H(+). Functionally, hydrolyzes pyrophosphate formed during P-Ser-HPr dephosphorylation by HPrK/P. Might play a role in controlling the intracellular pyrophosphate pool. The polypeptide is Pyrophosphatase PpaX (Halalkalibacterium halodurans (strain ATCC BAA-125 / DSM 18197 / FERM 7344 / JCM 9153 / C-125) (Bacillus halodurans)).